The primary structure comprises 260 residues: Transmembrane protein 106C (260 aa).

Residue Gly2 is the site of N-myristoyl glycine attachment. Residues 85–105 form a helical membrane-spanning segment; that stretch reads YVLLSVLLCLLASGLVFFFLF. The N-linked (GlcNAc...) asparagine glycan is linked to Asn184. The helical transmembrane segment at 196–216 threads the bilayer; it reads SYVYFYCTLPAIRVHNIVIFM.

The protein belongs to the TMEM106 family. As to quaternary structure, interacts with TMEM106B.

It localises to the endoplasmic reticulum membrane. It is found in the membrane. This is Transmembrane protein 106C (Tmem106c) from Mus musculus (Mouse).